The primary structure comprises 370 residues: Tyrosine-protein kinase transforming protein SEA (370 aa).

The Protein kinase domain occupies 60–323; the sequence is THRSRVIGRG…GLVCELERVL (264 aa). ATP contacts are provided by residues 66–74 and lysine 92; that span reads IGRGHFGSV. The Proton acceptor role is filled by aspartate 186. Position 216 is a phosphotyrosine; by autocatalysis (tyrosine 216). The interval 345 to 370 is disordered; sequence PPFPPAPRGQLPDSEDEEDEEEEVAE. A compositionally biased stretch (acidic residues) spans 357–370; the sequence is DSEDEEDEEEEVAE.

Belongs to the protein kinase superfamily. Tyr protein kinase family.

The catalysed reaction is L-tyrosyl-[protein] + ATP = O-phospho-L-tyrosyl-[protein] + ADP + H(+). The polypeptide is Tyrosine-protein kinase transforming protein SEA (V-SEA) (Galliformes).